Consider the following 499-residue polypeptide: Serine carboxypeptidase-like 34 (499 aa).

The first 25 residues, 1–25 (MGSHSVEFSVLVLFLVSFLLGSTSA), serve as a signal peptide directing secretion. N-linked (GlcNAc...) asparagine glycans are attached at residues Asn-73, Asn-124, and Asn-158. Intrachain disulfides connect Cys-106–Cys-383, Cys-269–Cys-280, and Cys-304–Cys-351. Residue Ser-200 is part of the active site. Residues Asn-310, Asn-372, and Asn-375 are each glycosylated (N-linked (GlcNAc...) asparagine). Residues Asp-419 and His-471 contribute to the active site.

Belongs to the peptidase S10 family. Ubiquitous.

The protein resides in the secreted. In terms of biological role, probable carboxypeptidase. The sequence is that of Serine carboxypeptidase-like 34 (SCPL34) from Arabidopsis thaliana (Mouse-ear cress).